Reading from the N-terminus, the 295-residue chain is DegV domain-containing protein MG326 (295 aa).

The 289-residue stretch at 4-292 folds into the DegV domain; it reads TAIITDSTAS…IDAFSISLLI (289 aa). Positions 63 and 95 each coordinate hexadecanoate.

May bind long-chain fatty acids, such as palmitate, and may play a role in lipid transport or fatty acid metabolism. The polypeptide is DegV domain-containing protein MG326 (Mycoplasma genitalium (strain ATCC 33530 / DSM 19775 / NCTC 10195 / G37) (Mycoplasmoides genitalium)).